The following is a 115-amino-acid chain: Photosystem II reaction center Psb28 protein (115 aa).

It belongs to the Psb28 family. Part of the photosystem II complex.

The protein localises to the plastid. It localises to the chloroplast thylakoid membrane. This chain is Photosystem II reaction center Psb28 protein, found in Trieres chinensis (Marine centric diatom).